The sequence spans 184 residues: MIKAIEGVVTKKEPAFAVLKTNSGVSYGIFISLFCSAKLSKGEKVELAITQIIREDANLLYGFLDANEQKMFEMLIKLNGIGASTAMAVCSSLSSQAFTNAIISGDADTFKSVPGIGPKTARRIIAELSDTKLISDESVPSYQNEALLALEALGFKREKIVKILPDCKSENTSDLIKEALKKLG.

The domain I stretch occupies residues 1–64 (MIKAIEGVVT…EDANLLYGFL (64 aa)). The segment at 65–134 (DANEQKMFEM…IAELSDTKLI (70 aa)) is domain II. The flexible linker stretch occupies residues 134 to 137 (ISDE). The segment at 138–184 (SVPSYQNEALLALEALGFKREKIVKILPDCKSENTSDLIKEALKKLG) is domain III.

It belongs to the RuvA family. As to quaternary structure, homotetramer. Forms an RuvA(8)-RuvB(12)-Holliday junction (HJ) complex. HJ DNA is sandwiched between 2 RuvA tetramers; dsDNA enters through RuvA and exits via RuvB. An RuvB hexamer assembles on each DNA strand where it exits the tetramer. Each RuvB hexamer is contacted by two RuvA subunits (via domain III) on 2 adjacent RuvB subunits; this complex drives branch migration. In the full resolvosome a probable DNA-RuvA(4)-RuvB(12)-RuvC(2) complex forms which resolves the HJ.

The protein localises to the cytoplasm. Its function is as follows. The RuvA-RuvB-RuvC complex processes Holliday junction (HJ) DNA during genetic recombination and DNA repair, while the RuvA-RuvB complex plays an important role in the rescue of blocked DNA replication forks via replication fork reversal (RFR). RuvA specifically binds to HJ cruciform DNA, conferring on it an open structure. The RuvB hexamer acts as an ATP-dependent pump, pulling dsDNA into and through the RuvAB complex. HJ branch migration allows RuvC to scan DNA until it finds its consensus sequence, where it cleaves and resolves the cruciform DNA. The protein is Holliday junction branch migration complex subunit RuvA of Campylobacter concisus (strain 13826).